The following is a 235-amino-acid chain: Phosphate-specific transport system accessory protein PhoU homolog 2 (235 aa).

Belongs to the PhoU family. As to quaternary structure, homodimer.

The protein localises to the cytoplasm. In terms of biological role, plays a role in the regulation of phosphate uptake. The chain is Phosphate-specific transport system accessory protein PhoU homolog 2 (phoU2) from Thermotoga maritima (strain ATCC 43589 / DSM 3109 / JCM 10099 / NBRC 100826 / MSB8).